A 374-amino-acid chain; its full sequence is Flap endonuclease 1 (374 aa).

The N-domain stretch occupies residues 1 to 105; it reads MGVKGLNQLI…GELEKRMIRK (105 aa). Mg(2+) is bound at residue D34. R47 and R71 together coordinate DNA. The Mg(2+) site is built by D87, E159, E161, D180, and D182. The interval 123 to 254 is I-domain; the sequence is EMVRYEKRSV…VTAFKLIKEH (132 aa). DNA is bound at residue E159. DNA is bound by residues G232 and D234. D234 lines the Mg(2+) pocket. The tract at residues 341–349 is interaction with PCNA; sequence VQGRLDGFF. Positions 354–365 are enriched in basic and acidic residues; sequence TEKRKPEQDKKT. Residues 354-374 are disordered; it reads TEKRKPEQDKKTKGSKKAKKK.

The protein belongs to the XPG/RAD2 endonuclease family. FEN1 subfamily. As to quaternary structure, interacts with PCNA. Three molecules of FEN1 bind to one PCNA trimer with each molecule binding to one PCNA monomer. PCNA stimulates the nuclease activity without altering cleavage specificity. Requires Mg(2+) as cofactor. Post-translationally, phosphorylated. Phosphorylation upon DNA damage induces relocalization to the nuclear plasma.

It is found in the nucleus. The protein localises to the nucleolus. Its subcellular location is the nucleoplasm. The protein resides in the mitochondrion. Structure-specific nuclease with 5'-flap endonuclease and 5'-3' exonuclease activities involved in DNA replication and repair. During DNA replication, cleaves the 5'-overhanging flap structure that is generated by displacement synthesis when DNA polymerase encounters the 5'-end of a downstream Okazaki fragment. It enters the flap from the 5'-end and then tracks to cleave the flap base, leaving a nick for ligation. Also involved in the long patch base excision repair (LP-BER) pathway, by cleaving within the apurinic/apyrimidinic (AP) site-terminated flap. Acts as a genome stabilization factor that prevents flaps from equilibrating into structures that lead to duplications and deletions. Also possesses 5'-3' exonuclease activity on nicked or gapped double-stranded DNA, and exhibits RNase H activity. Also involved in replication and repair of rDNA and in repairing mitochondrial DNA. The polypeptide is Flap endonuclease 1 (Meyerozyma guilliermondii (strain ATCC 6260 / CBS 566 / DSM 6381 / JCM 1539 / NBRC 10279 / NRRL Y-324) (Yeast)).